Consider the following 417-residue polypeptide: Serine hydroxymethyltransferase 1 (417 aa).

(6S)-5,6,7,8-tetrahydrofolate contacts are provided by residues Leu-121 and Gly-125–Leu-127. Residue Lys-229 is modified to N6-(pyridoxal phosphate)lysine. Position 354–356 (Ser-354–Phe-356) interacts with (6S)-5,6,7,8-tetrahydrofolate.

This sequence belongs to the SHMT family. Homodimer. Pyridoxal 5'-phosphate serves as cofactor.

It localises to the cytoplasm. It carries out the reaction (6R)-5,10-methylene-5,6,7,8-tetrahydrofolate + glycine + H2O = (6S)-5,6,7,8-tetrahydrofolate + L-serine. Its pathway is one-carbon metabolism; tetrahydrofolate interconversion. It participates in amino-acid biosynthesis; glycine biosynthesis; glycine from L-serine: step 1/1. In terms of biological role, catalyzes the reversible interconversion of serine and glycine with tetrahydrofolate (THF) serving as the one-carbon carrier. This reaction serves as the major source of one-carbon groups required for the biosynthesis of purines, thymidylate, methionine, and other important biomolecules. Also exhibits THF-independent aldolase activity toward beta-hydroxyamino acids, producing glycine and aldehydes, via a retro-aldol mechanism. The protein is Serine hydroxymethyltransferase 1 of Pseudomonas syringae pv. syringae (strain B728a).